We begin with the raw amino-acid sequence, 1454 residues long: Serine/threonine-protein kinase VPS15 (1454 aa).

Glycine 2 carries N-myristoyl glycine lipidation. Residues 27–300 (VHYVSQLNSS…LLNKYRGIFF (274 aa)) form the Protein kinase domain. ATP-binding positions include 33 to 41 (LNSSRFLKT) and lysine 54. Residue aspartate 147 is the Proton acceptor of the active site. 4 HEAT repeats span residues 460–497 (NKIDRVVPYFVCCFEDSDQDVQALSLLTLIQVLTSVRK), 576–613 (KLIQSVEDLTVSFLTDNDTYVKMALLQNILPLCKFFGR), 615–652 (RTNDIILSHLITYLNDKDPALRVSLIQTISGISILLGT), and 654–691 (TLEQYILPLLIQTITDSEELVVISVLQSLKSLFKTGLI). 6 WD repeats span residues 1078–1118 (NEPN…VGEV), 1126–1165 (DCSSTVTQITMIPNFDAFAVSSKDGQIIVLKVNHYQQESE), 1229–1268 (PRHGAVSSICIDEECCVLILGTTRGIIDIWDIRFNVLIRS), 1275–1315 (APIT…CQYA), 1344–1382 (RSLNALSTISVSNDKILLTDEATSSIVMFSLNELSSSKA), and 1422–1454 (YHHDIINSISTCEVDETPLLVACDNSGLIGIFQ).

Belongs to the protein kinase superfamily. Ser/Thr protein kinase family. As to quaternary structure, component of the autophagy-specific VPS34 PI3-kinase complex I composed of VPS15, VPS30, VPS34, ATG14 and ATG38; and of the VPS34 PI3-kinase complex II composed of VPS15, VPS30, VPS34 and VPS38. Interacts directly with ATG14 and GPA1. Interacts directly with VPS34. In terms of processing, autophosphorylated.

Its subcellular location is the golgi apparatus. It localises to the trans-Golgi network membrane. The protein localises to the endosome membrane. The catalysed reaction is L-seryl-[protein] + ATP = O-phospho-L-seryl-[protein] + ADP + H(+). The enzyme catalyses L-threonyl-[protein] + ATP = O-phospho-L-threonyl-[protein] + ADP + H(+). Functionally, serine/threonine-protein kinase required for cytoplasm to vacuole transport (Cvt) and autophagy as a part of the autophagy-specific VPS34 PI3-kinase complex I. This complex is essential to recruit the ATG8-phosphatidylinositol conjugate and the ATG12-ATG5 conjugate to the pre-autophagosomal structure. Is also involved in endosome-to-Golgi retrograde transport as part of the VPS34 PI3-kinase complex II. This second complex is required for the endosome-to-Golgi retrieval of PEP1 and KEX2, and the recruitment of VPS5 and VPS7, two components of the retromer complex, to endosomal membranes (probably through the synthesis of a specific pool of phosphatidylinositol 3-phosphate recruiting the retromer to the endosomes). By regulating VPS34 kinase activity, VPS15 appears to be essential for the efficient delivery of soluble hydrolases to the yeast vacuole. May function as a G protein beta subunit to propagate the pheromone response at the endosome with GPA1. The chain is Serine/threonine-protein kinase VPS15 from Saccharomyces cerevisiae (strain ATCC 204508 / S288c) (Baker's yeast).